We begin with the raw amino-acid sequence, 84 residues long: Large ribosomal subunit protein bL27 (84 aa).

Positions 1–21 (MAHKKGGGSTKNGRDSNPKYL) are disordered.

Belongs to the bacterial ribosomal protein bL27 family.

The polypeptide is Large ribosomal subunit protein bL27 (Chlorobaculum parvum (strain DSM 263 / NCIMB 8327) (Chlorobium vibrioforme subsp. thiosulfatophilum)).